The following is a 216-amino-acid chain: Kynurenine formamidase (216 aa).

Tryptophan 25 lines the substrate pocket. Residues histidine 55, histidine 59, and aspartate 61 each contribute to the Zn(2+) site. Histidine 65 serves as the catalytic Proton donor/acceptor. Positions 167 and 179 each coordinate Zn(2+).

The protein belongs to the Cyclase 1 superfamily. KynB family. As to quaternary structure, homodimer. It depends on Zn(2+) as a cofactor.

The catalysed reaction is N-formyl-L-kynurenine + H2O = L-kynurenine + formate + H(+). The protein operates within amino-acid degradation; L-tryptophan degradation via kynurenine pathway; L-kynurenine from L-tryptophan: step 2/2. Its function is as follows. Catalyzes the hydrolysis of N-formyl-L-kynurenine to L-kynurenine, the second step in the kynurenine pathway of tryptophan degradation. This chain is Kynurenine formamidase, found in Cupriavidus taiwanensis (strain DSM 17343 / BCRC 17206 / CCUG 44338 / CIP 107171 / LMG 19424 / R1) (Ralstonia taiwanensis (strain LMG 19424)).